The following is a 312-amino-acid chain: Methionyl-tRNA formyltransferase (312 aa).

109–112 (SLLP) is a (6S)-5,6,7,8-tetrahydrofolate binding site.

The protein belongs to the Fmt family.

The enzyme catalyses L-methionyl-tRNA(fMet) + (6R)-10-formyltetrahydrofolate = N-formyl-L-methionyl-tRNA(fMet) + (6S)-5,6,7,8-tetrahydrofolate + H(+). In terms of biological role, attaches a formyl group to the free amino group of methionyl-tRNA(fMet). The formyl group appears to play a dual role in the initiator identity of N-formylmethionyl-tRNA by promoting its recognition by IF2 and preventing the misappropriation of this tRNA by the elongation apparatus. This is Methionyl-tRNA formyltransferase from Caulobacter sp. (strain K31).